The chain runs to 225 residues: UPF0758 protein AZOSEA04420 (225 aa).

The MPN domain occupies 102–225; that stretch reads VFESPLAVRN…PLSFAERGLL (124 aa). His173, His175, and Asp186 together coordinate Zn(2+). The JAMM motif motif lies at 173 to 186; sequence HNHPSGAAEPSPAD.

It belongs to the UPF0758 family.

This chain is UPF0758 protein AZOSEA04420, found in Aromatoleum aromaticum (strain DSM 19018 / LMG 30748 / EbN1) (Azoarcus sp. (strain EbN1)).